The chain runs to 114 residues: Cell division protein FtsB (114 aa).

Topologically, residues 1–3 (MGK) are cytoplasmic. A helical membrane pass occupies residues 4-21 (LTLLLVVLLGWLQYSLWV). At 22 to 114 (GKNGVHDYMR…ASYPSVTASH (93 aa)) the chain is on the periplasmic side. Residues 31-62 (RVKQDVATQQANNAKLKSRNDQLFAEIDDLNG) are a coiled coil.

It belongs to the FtsB family. As to quaternary structure, part of a complex composed of FtsB, FtsL and FtsQ.

The protein localises to the cell inner membrane. Functionally, essential cell division protein. May link together the upstream cell division proteins, which are predominantly cytoplasmic, with the downstream cell division proteins, which are predominantly periplasmic. The sequence is that of Cell division protein FtsB from Edwardsiella ictaluri (strain 93-146).